The sequence spans 325 residues: Replication factor C small subunit (325 aa).

Residue 52-59 participates in ATP binding; the sequence is GPAGVGKT.

The protein belongs to the activator 1 small subunits family. RfcS subfamily. As to quaternary structure, heteromultimer composed of small subunits (RfcS) and large subunits (RfcL).

Its function is as follows. Part of the RFC clamp loader complex which loads the PCNA sliding clamp onto DNA. The polypeptide is Replication factor C small subunit (Natronomonas pharaonis (strain ATCC 35678 / DSM 2160 / CIP 103997 / JCM 8858 / NBRC 14720 / NCIMB 2260 / Gabara) (Halobacterium pharaonis)).